Here is a 225-residue protein sequence, read N- to C-terminus: NAD(P)H-quinone oxidoreductase subunit K, chloroplastic (225 aa).

Positions 43, 44, 108, and 139 each coordinate [4Fe-4S] cluster.

The protein belongs to the complex I 20 kDa subunit family. In terms of assembly, NDH is composed of at least 16 different subunits, 5 of which are encoded in the nucleus. [4Fe-4S] cluster serves as cofactor.

It is found in the plastid. Its subcellular location is the chloroplast thylakoid membrane. It catalyses the reaction a plastoquinone + NADH + (n+1) H(+)(in) = a plastoquinol + NAD(+) + n H(+)(out). It carries out the reaction a plastoquinone + NADPH + (n+1) H(+)(in) = a plastoquinol + NADP(+) + n H(+)(out). NDH shuttles electrons from NAD(P)H:plastoquinone, via FMN and iron-sulfur (Fe-S) centers, to quinones in the photosynthetic chain and possibly in a chloroplast respiratory chain. The immediate electron acceptor for the enzyme in this species is believed to be plastoquinone. Couples the redox reaction to proton translocation, and thus conserves the redox energy in a proton gradient. This is NAD(P)H-quinone oxidoreductase subunit K, chloroplastic from Fagopyrum esculentum subsp. ancestrale (Wild buckwheat).